The chain runs to 352 residues: C-C chemokine receptor type 5 (352 aa).

Topologically, residues 1 to 30 (MDYQVSSPTYDIDYYTSEPCQKVNVKQIAA) are extracellular. Tyr3 is modified (sulfotyrosine). O-linked (GalNAc...) serine glycosylation is found at Ser6 and Ser7. 3 positions are modified to sulfotyrosine: Tyr10, Tyr14, and Tyr15. 2 cysteine pairs are disulfide-bonded: Cys20-Cys269 and Cys101-Cys178. A helical membrane pass occupies residues 31-58 (RLLPPLYSLVFIFGFVGNILVVLILINC). Residues 59–68 (KRLKSMTDIY) lie on the Cytoplasmic side of the membrane. A helical membrane pass occupies residues 69-89 (LLNLAISDLFFLLTVPFWAHY). Topologically, residues 90–102 (AAAQWDFGNTMCQ) are extracellular. The helical transmembrane segment at 103–124 (LLTGLYFIGFFSGIFFIILLTI) threads the bilayer. Over 125 to 141 (DRYLAIVHAVFALKART) the chain is Cytoplasmic. The helical transmembrane segment at 142–166 (VTFGVVTSVITWVVAVFASLPGIIF) threads the bilayer. Over 167 to 198 (TRSQREGVHYTCSSHFPYSQYQFWKNFQTLKI) the chain is Extracellular. Residues 199-218 (VILGLVLPLLVMVICYSGIL) traverse the membrane as a helical segment. Residues 219–235 (KTLLRCRNEKKRHRAVR) lie on the Cytoplasmic side of the membrane. The helical transmembrane segment at 236–260 (LIFTIMIVYFLFWAPYNIVLLLNTF) threads the bilayer. Topologically, residues 261–277 (QEFFGLNNCSSSNRLDQ) are extracellular. A helical membrane pass occupies residues 278 to 301 (AMQVTETLGMTHCCINPIIYAFVG). Topologically, residues 302-352 (EKFRNYLLVFFQKHIAKRFCKCCSIFQQEAPERASSVYTRSTGEQETSVGL) are cytoplasmic. 3 S-palmitoyl cysteine lipidation sites follow: Cys321, Cys323, and Cys324. Phosphoserine; by BARK1 is present on residues Ser336, Ser337, Ser342, and Ser349.

It belongs to the G-protein coupled receptor 1 family. As to quaternary structure, interacts with PRAF2. Efficient ligand binding to CCL3/MIP-1alpha and CCL4/MIP-1beta requires sulfation, O-glycosylation and sialic acid modifications. Glycosylation on Ser-6 is required for efficient binding of CCL4. Interacts with GRK2. Interacts with ARRB1 and ARRB2. Interacts with CNIH4. Interacts with S100A4; this interaction stimulates T-lymphocyte chemotaxis. In terms of processing, sulfated on at least 2 of the N-terminal tyrosines. Sulfation is required for efficient binding of the chemokines, CCL3 and CCL4. Post-translationally, palmitoylation in the C-terminal is important for cell surface expression. Phosphorylation on serine residues in the C-terminal is stimulated by binding CC chemokines especially by APO-RANTES. In terms of processing, O-glycosylated, but not N-glycosylated. Ser-6 appears to be the major site even if Ser-7 may be also O-glycosylated. Also sialylated glycans present which contribute to chemokine binding. Thr-16 and Ser-17 may also be glycosylated and, if so, with small moieties such as a T-antigen.

The protein localises to the cell membrane. In terms of biological role, receptor for a number of inflammatory CC-chemokines including CCL3/MIP-1-alpha, CCL4/MIP-1-beta and RANTES and subsequently transduces a signal by increasing the intracellular calcium ion level. May play a role in the control of granulocytic lineage proliferation or differentiation. Participates in T-lymphocyte migration to the infection site by acting as a chemotactic receptor. The protein is C-C chemokine receptor type 5 (CCR5) of Rhinopithecus avunculus (Tonkin snub-nosed monkey).